The primary structure comprises 578 residues: Proline--tRNA ligase (578 aa).

The protein belongs to the class-II aminoacyl-tRNA synthetase family. ProS type 1 subfamily. As to quaternary structure, homodimer.

It is found in the cytoplasm. It carries out the reaction tRNA(Pro) + L-proline + ATP = L-prolyl-tRNA(Pro) + AMP + diphosphate. In terms of biological role, catalyzes the attachment of proline to tRNA(Pro) in a two-step reaction: proline is first activated by ATP to form Pro-AMP and then transferred to the acceptor end of tRNA(Pro). As ProRS can inadvertently accommodate and process non-cognate amino acids such as alanine and cysteine, to avoid such errors it has two additional distinct editing activities against alanine. One activity is designated as 'pretransfer' editing and involves the tRNA(Pro)-independent hydrolysis of activated Ala-AMP. The other activity is designated 'posttransfer' editing and involves deacylation of mischarged Ala-tRNA(Pro). The misacylated Cys-tRNA(Pro) is not edited by ProRS. This is Proline--tRNA ligase from Burkholderia vietnamiensis (strain G4 / LMG 22486) (Burkholderia cepacia (strain R1808)).